A 341-amino-acid polypeptide reads, in one-letter code: MGSLKEGQGRDMEEGESEEPLLMAQNQRFTMFPIRYKSIWEMYKKAEASFWTAEEVDLSTDVQQWEALTDSEKHFISHILAFFAASDGIVLENLAARFLNDVQVPEARAFYGFQIAMENIHSEMYSLLLETFIKDSKEKDRLFNAIETIPCISKKAKWCLDWIQSPMSFAVRLVAFACVEGIFFSGSFCAIFWLKKRGLMPGLTFSNELISRDEGLHCDFACLLYSLLQKQLPLEKVYQIVHEAVEIETEFVCKALPCDLIGMNSNLMSQYIQFVADRLLVTLGCERTYKAENPFDWMEFISLQGKTNFFEKRVGEYQKASVMSNLQNGNQNYEFTTEEDF.

The segment at 1–20 (MGSLKEGQGRDMEEGESEEP) is disordered. Fe cation-binding residues include Asp-87, Glu-118, and His-121. Tyr-125 is an active-site residue. Glu-180, Glu-214, and His-217 together coordinate Fe cation.

It belongs to the ribonucleoside diphosphate reductase small chain family. Homodimer and heterodimer with TSO2. Heterotetramer of two R1 and two R2 chains. A radical transfer pathway may occur between Tyr-125 of protein R2 and R1. Homodimer contains a dinuclear non-heme iron center and a stable tyrosyl radical essential for activity. A transfer pathway may occur between Tyr-125 of protein R2 and R1. Interacts with CSN7. Fe cation is required as a cofactor. Expressed in rosette leaves, cauline leaves, stems and flowers.

It is found in the cytoplasm. It catalyses the reaction a 2'-deoxyribonucleoside 5'-diphosphate + [thioredoxin]-disulfide + H2O = a ribonucleoside 5'-diphosphate + [thioredoxin]-dithiol. Inhibited by phenol, paracetamol, 2,4,6-trimethylphenol, resveratrol, furfuryl mercaptan, 2-thiophenthiol, phenylhydrazine, and hydroxyurea. In terms of biological role, provides the precursors necessary for DNA synthesis. Catalyzes the biosynthesis of deoxyribonucleotides from the corresponding ribonucleotides. The chain is Ribonucleoside-diphosphate reductase small chain A (RNR2A) from Arabidopsis thaliana (Mouse-ear cress).